Reading from the N-terminus, the 340-residue chain is Sterol-4-alpha-carboxylate 3-dehydrogenase erg26, decarboxylating (340 aa).

Tyr-144 (proton acceptor) is an active-site residue. NAD(+) is bound at residue Lys-148.

Belongs to the 3-beta-HSD family. As to quaternary structure, heterotetramer of erg25, erg26, erg27 and erg28. Erg28 acts as a scaffold to tether erg27 and other 4,4-demethylation-related enzymes, forming a demethylation enzyme complex, in the endoplasmic reticulum.

Its subcellular location is the endoplasmic reticulum membrane. The enzyme catalyses 4beta-methylzymosterol-4alpha-carboxylate + NADP(+) = 3-dehydro-4-methylzymosterol + CO2 + NADPH. It participates in steroid biosynthesis; zymosterol biosynthesis; zymosterol from lanosterol: step 4/6. The protein operates within steroid metabolism; ergosterol biosynthesis. Its function is as follows. Sterol-4-alpha-carboxylate 3-dehydrogenase; part of the third module of ergosterol biosynthesis pathway that includes by the late steps of the pathway. Erg26 is a catalytic component of the C-4 demethylation complex that catalyzes the oxidative decarboxylation that results in a reduction of the 3-beta-hydroxy group at the C-3 carbon to an oxo group. The third module or late pathway involves the ergosterol synthesis itself through consecutive reactions that mainly occur in the endoplasmic reticulum (ER) membrane. Firstly, the squalene synthase erg9 catalyzes the condensation of 2 farnesyl pyrophosphate moieties to form squalene, which is the precursor of all steroids. Secondly, squalene is converted into lanosterol by the consecutive action of the squalene epoxidase erg1 and the lanosterol synthase erg7. The lanosterol 14-alpha-demethylase erg11/cyp1 catalyzes C14-demethylation of lanosterol to produce 4,4'-dimethyl cholesta-8,14,24-triene-3-beta-ol. In the next steps, a complex process involving various demethylation, reduction and desaturation reactions catalyzed by the C-14 reductase erg24 and the C-4 demethylation complex erg25-erg26-erg27 leads to the production of zymosterol. Erg28 likely functions in the C-4 demethylation complex reaction by tethering erg26 and Erg27 to the endoplasmic reticulum or to facilitate interaction between these proteins. Then, the sterol 24-C-methyltransferase erg6 catalyzes the methyl transfer from S-adenosyl-methionine to the C-24 of zymosterol to form fecosterol. The C-8 sterol isomerase erg2 catalyzes the reaction which results in unsaturation at C-7 in the B ring of sterols and thus converts fecosterol to episterol. The sterol-C5-desaturases erg31 and erg32 then catalyze the introduction of a C-5 double bond in the B ring to produce 5-dehydroepisterol. The C-22 sterol desaturase erg5 further converts 5-dehydroepisterol into ergosta-5,7,22,24(28)-tetraen-3beta-ol by forming the C-22(23) double bond in the sterol side chain. Finally, ergosta-5,7,22,24(28)-tetraen-3beta-ol is substrate of the C-24(28) sterol reductase erg4 to produce ergosterol. In the genus Schizosaccharomyces, a second route exists between lanosterol and fecosterol, via the methylation of lanosterol to eburicol by erg6, followed by C14-demethylation by erg11/cyp1 and C4-demethylation by the demethylation complex erg25-erg26-erg27. This chain is Sterol-4-alpha-carboxylate 3-dehydrogenase erg26, decarboxylating, found in Schizosaccharomyces pombe (strain 972 / ATCC 24843) (Fission yeast).